Consider the following 452-residue polypeptide: Multifunctional glycoside hydrolase (452 aa).

Substrate contacts are provided by Q17, H118, and N162. E163 acts as the Proton donor in catalysis. Y303 contributes to the substrate binding site. The Nucleophile role is filled by E361. Substrate-binding positions include W407 and 414 to 415 (EW).

This sequence belongs to the glycosyl hydrolase 1 family. Monomer. Homotrimer.

It carries out the reaction Hydrolysis of terminal, non-reducing beta-D-glucosyl residues with release of beta-D-glucose.. The enzyme catalyses Hydrolysis of terminal non-reducing beta-D-galactose residues in beta-D-galactosides.. The catalysed reaction is Hydrolysis of (1-&gt;4)-beta-D-xylans, to remove successive D-xylose residues from the non-reducing termini.. It catalyses the reaction Hydrolysis of (1-&gt;4)-linkages in (1-&gt;4)-beta-D-glucans, to remove successive glucose units.. It carries out the reaction Hydrolysis of (1-&gt;4)-beta-D-glucosidic linkages in cellulose and cellotetraose, releasing cellobiose from the non-reducing ends of the chains.. It participates in glycan metabolism; beta-D-glucan degradation. Its pathway is glycan metabolism; cellulose degradation. Slight activation by Mn(2+), Ni(2+) and K(+). Slight inhibition by Fe(3+), Zn(2+), Co(2+), Mg(2+), Cu(2+), Na(+) and NH4(+). Has high beta-D-glucosidase, exoglucanase, beta-D-xylosidase, beta-D-galactosidase, and transgalactosylation activities in vitro. Has a very broad substrate specificity with the highest activity with p-nitrophenyl beta-D-galactopyranoside (pNPGal) as substrate. Active with pNP-beta-D-glucopyranoside (pNPGlu), pNP-beta-D-cellobioside (pNPC), lactose, pNP-beta-D-xylopyranoside (pNPX) and cellobiose in the order of decreasing activity, respectively. Very low activity with soluble polysaccharides synanthrin and locust bean gum. Very low, but detectable activity with insoluble substrates such as cotton and filter paper. No activity with pNP-alpha-L-arabinofuranoside (pNPAr) or carboxymethylcellulose (CMC) as substrates. Synthesizes galactooligosaccharides (GalOS) from lactose. Hydrolyzes pretreated corn stover releasing both glucose and xylose. This multifunctional enzyme may provide C.owensensis the benefit of utilizing a wide variety of available carbon sources in its natural growing environment as the ability to convert a wide range of soluble oligosaccharides to monoses is required in order to assimilate them. This chain is Multifunctional glycoside hydrolase, found in Caldicellulosiruptor owensensis (strain ATCC 700167 / DSM 13100 / OL).